The sequence spans 330 residues: Peroxidase 42 (330 aa).

Residues 1 to 23 form the signal peptide; it reads MGGKGVMMVAILCLWALSATSEA. Cystine bridges form between Cys40–Cys119, Cys73–Cys78, Cys125–Cys323, and Cys204–Cys231. The active-site Proton acceptor is the His71. 4 residues coordinate Ca(2+): Asp72, Val75, Asp79, and Ser81. Position 167 (Pro167) interacts with substrate. A glycan (N-linked (GlcNAc...) asparagine) is linked at Asn170. His197 is a binding site for heme b. Position 198 (Ser198) interacts with Ca(2+). Asp247, Thr250, and Asp255 together coordinate Ca(2+).

This sequence belongs to the peroxidase family. Classical plant (class III) peroxidase subfamily. The cofactor is heme b. Requires Ca(2+) as cofactor. As to expression, constitutively expressed in the whole plant, with the highest expression in roots.

The protein resides in the secreted. It carries out the reaction 2 a phenolic donor + H2O2 = 2 a phenolic radical donor + 2 H2O. Functionally, removal of H(2)O(2), oxidation of toxic reductants, biosynthesis and degradation of lignin, suberization, auxin catabolism, response to environmental stresses such as wounding, pathogen attack and oxidative stress. These functions might be dependent on each isozyme/isoform in each plant tissue. Might function as heat shock-like defense protein. The chain is Peroxidase 42 (PER42) from Arabidopsis thaliana (Mouse-ear cress).